Here is a 416-residue protein sequence, read N- to C-terminus: CBL-interacting serine/threonine-protein kinase 21 (416 aa).

The 253-residue stretch at 12–264 folds into the Protein kinase domain; that stretch reads YEIGRTIGEG…AEIIIKDSWF (253 aa). ATP-binding positions include 18 to 26 and Lys-41; that span reads IGEGNFAKV. Asp-134 serves as the catalytic Proton acceptor. The segment at 152 to 178 is activation loop; that stretch reads DFGLSAVPKSGDMLSTACGSPCYIAPE. The residue at position 156 (Ser-156) is a Phosphoserine. The residue at position 167 (Thr-167) is a Phosphothreonine. The region spanning 291 to 315 is the NAF domain; that stretch reads ASSNFINAFQIIAMSSDLDLSGLFE. The interval 321–351 is PPI; sequence RYKTRIGSKNTAQETIKKIEAAATYVSLSVE.

The protein belongs to the protein kinase superfamily. CAMK Ser/Thr protein kinase family. SNF1 subfamily. Interacts with CBL9. Requires Mn(2+) as cofactor.

It catalyses the reaction L-seryl-[protein] + ATP = O-phospho-L-seryl-[protein] + ADP + H(+). It carries out the reaction L-threonyl-[protein] + ATP = O-phospho-L-threonyl-[protein] + ADP + H(+). Functionally, CIPK serine-threonine protein kinases interact with CBL proteins. Binding of a CBL protein to the regulatory NAF domain of CIPK protein lead to the activation of the kinase in a calcium-dependent manner. This chain is CBL-interacting serine/threonine-protein kinase 21 (CIPK21), found in Arabidopsis thaliana (Mouse-ear cress).